Reading from the N-terminus, the 94-residue chain is Co-chaperonin GroES (94 aa).

The protein belongs to the GroES chaperonin family. As to quaternary structure, heptamer of 7 subunits arranged in a ring. Interacts with the chaperonin GroEL.

The protein localises to the cytoplasm. In terms of biological role, together with the chaperonin GroEL, plays an essential role in assisting protein folding. The GroEL-GroES system forms a nano-cage that allows encapsulation of the non-native substrate proteins and provides a physical environment optimized to promote and accelerate protein folding. GroES binds to the apical surface of the GroEL ring, thereby capping the opening of the GroEL channel. The protein is Co-chaperonin GroES of Anoxybacillus flavithermus (strain DSM 21510 / WK1).